The chain runs to 207 residues: Protein GrpE (207 aa).

The disordered stretch occupies residues 1-31 (MSEHQTPPEEDLTVANGDSAEAVSEPDVTVA).

It belongs to the GrpE family. In terms of assembly, homodimer.

Its subcellular location is the cytoplasm. Its function is as follows. Participates actively in the response to hyperosmotic and heat shock by preventing the aggregation of stress-denatured proteins, in association with DnaK and GrpE. It is the nucleotide exchange factor for DnaK and may function as a thermosensor. Unfolded proteins bind initially to DnaJ; upon interaction with the DnaJ-bound protein, DnaK hydrolyzes its bound ATP, resulting in the formation of a stable complex. GrpE releases ADP from DnaK; ATP binding to DnaK triggers the release of the substrate protein, thus completing the reaction cycle. Several rounds of ATP-dependent interactions between DnaJ, DnaK and GrpE are required for fully efficient folding. The chain is Protein GrpE from Synechococcus elongatus (strain ATCC 33912 / PCC 7942 / FACHB-805) (Anacystis nidulans R2).